Consider the following 315-residue polypeptide: Homoserine kinase (315 aa).

ATP is bound at residue 96–106; the sequence is PHSRGLGSSAA.

This sequence belongs to the GHMP kinase family. Homoserine kinase subfamily.

The protein localises to the cytoplasm. It carries out the reaction L-homoserine + ATP = O-phospho-L-homoserine + ADP + H(+). It functions in the pathway amino-acid biosynthesis; L-threonine biosynthesis; L-threonine from L-aspartate: step 4/5. Catalyzes the ATP-dependent phosphorylation of L-homoserine to L-homoserine phosphate. The polypeptide is Homoserine kinase (Mycolicibacterium paratuberculosis (strain ATCC BAA-968 / K-10) (Mycobacterium paratuberculosis)).